The chain runs to 58 residues: MGKTVVRSNESLDDALRRFKRSVSKAGTIQEYRKREFYEKPSVKRKLKSEAARKRKKF.

It belongs to the bacterial ribosomal protein bS21 family.

The chain is Small ribosomal subunit protein bS21 from Latilactobacillus sakei subsp. sakei (strain 23K) (Lactobacillus sakei subsp. sakei).